We begin with the raw amino-acid sequence, 224 residues long: Ribosomal RNA large subunit methyltransferase E (224 aa).

Residues G64, W66, D97, D113, and D138 each coordinate S-adenosyl-L-methionine. Catalysis depends on K178, which acts as the Proton acceptor.

The protein belongs to the class I-like SAM-binding methyltransferase superfamily. RNA methyltransferase RlmE family.

The protein resides in the cytoplasm. The catalysed reaction is uridine(2552) in 23S rRNA + S-adenosyl-L-methionine = 2'-O-methyluridine(2552) in 23S rRNA + S-adenosyl-L-homocysteine + H(+). Its function is as follows. Specifically methylates the uridine in position 2552 of 23S rRNA at the 2'-O position of the ribose in the fully assembled 50S ribosomal subunit. The chain is Ribosomal RNA large subunit methyltransferase E from Methylibium petroleiphilum (strain ATCC BAA-1232 / LMG 22953 / PM1).